Consider the following 80-residue polypeptide: MKLTCVLIVVVLFLTACQLITTDDSTGKQRYQAWKLRSKMQNSVLSRLSKRCDEEGTGCSSDSECCSGRCTPEGLFEFCE.

A signal peptide spans 1-22 (MKLTCVLIVVVLFLTACQLITT). Residues 23 to 49 (DDSTGKQRYQAWKLRSKMQNSVLSRLS) constitute a propeptide that is removed on maturation. Disulfide bonds link cysteine 52–cysteine 66, cysteine 59–cysteine 70, and cysteine 65–cysteine 79.

This sequence belongs to the conotoxin O1 superfamily. Peptide predicted to begin at Arg-51, but it seems more probable that it begins at Cys-52, since this position corresponds to a dibasic residue cleavage. In terms of tissue distribution, expressed by the venom duct.

The protein localises to the secreted. Functionally, omega-conotoxins act at presynaptic membranes, they bind and block voltage-gated calcium channels (Cav). The sequence is that of Omega-conotoxin-like 1 from Conus capitaneus (Captain cone).